The primary structure comprises 70 residues: Putative microRNA 17 host gene protein (70 aa).

Residues 1–20 (MFCHVDVKISSKRYTWTKLP) lie on the Cytoplasmic side of the membrane. The helical transmembrane segment at 21–43 (LNVPKLVLIYLQSHFVLFFFSMC) threads the bilayer. Residues 44–70 (QSIWERPAIGRATTSSASWMVGYDCLL) are Extracellular-facing.

In terms of tissue distribution, highly expressed in B-cell lymphoma and lung cancer.

The protein resides in the membrane. The protein is Putative microRNA 17 host gene protein (MIR17HG) of Homo sapiens (Human).